Consider the following 430-residue polypeptide: Enolase (430 aa).

Glutamine 163 lines the (2R)-2-phosphoglycerate pocket. The active-site Proton donor is the glutamate 205. Mg(2+) contacts are provided by aspartate 242, glutamate 287, and aspartate 314. Positions 339, 368, 369, and 390 each coordinate (2R)-2-phosphoglycerate. Lysine 339 (proton acceptor) is an active-site residue.

It belongs to the enolase family. The cofactor is Mg(2+).

It localises to the cytoplasm. Its subcellular location is the secreted. The protein localises to the cell surface. The enzyme catalyses (2R)-2-phosphoglycerate = phosphoenolpyruvate + H2O. It participates in carbohydrate degradation; glycolysis; pyruvate from D-glyceraldehyde 3-phosphate: step 4/5. Functionally, catalyzes the reversible conversion of 2-phosphoglycerate (2-PG) into phosphoenolpyruvate (PEP). It is essential for the degradation of carbohydrates via glycolysis. The protein is Enolase of Clostridioides difficile (strain 630) (Peptoclostridium difficile).